A 287-amino-acid polypeptide reads, in one-letter code: Thioredoxin-related transmembrane protein 2 (287 aa).

An N-terminal signal peptide occupies residues M1 to A13. At A14–M112 the chain is on the extracellular side. Residues G113–L133 traverse the membrane as a helical segment. Topologically, residues G134–Q287 are cytoplasmic. In terms of domain architecture, Thioredoxin spans H137–S209. The short motif at K284–Q287 is the Di-lysine motif element.

In terms of assembly, monomer. Homodimer; disulfide-linked. Occurs in both reduced and oxidized monomeric form. Oxidative conditions increase homodimerization.

It localises to the endoplasmic reticulum membrane. The protein localises to the mitochondrion membrane. Endoplasmic reticulum and mitochondria-associated protein that probably functions as a regulator of cellular redox state and thereby regulates protein post-translational modification, protein folding and mitochondrial activity. The chain is Thioredoxin-related transmembrane protein 2 (tmx2) from Xenopus laevis (African clawed frog).